The chain runs to 633 residues: Chaperone protein HtpG (633 aa).

The segment at 1 to 345 (MSADTQSETL…SDDLPLNISR (345 aa)) is a; substrate-binding. The tract at residues 346-562 (EMLQHNPMIS…EYDFGMGMQR (217 aa)) is b. The interval 563 to 633 (LLQAAGHQLP…VRRVNNLLAG (71 aa)) is c.

It belongs to the heat shock protein 90 family. As to quaternary structure, homodimer.

The protein localises to the cytoplasm. Its function is as follows. Molecular chaperone. Has ATPase activity. The polypeptide is Chaperone protein HtpG (Halorhodospira halophila (strain DSM 244 / SL1) (Ectothiorhodospira halophila (strain DSM 244 / SL1))).